The sequence spans 318 residues: Isoflavone reductase (318 aa).

Residues 11-17 (GPTGAIG), Arg-36, and Lys-44 each bind NADP(+). Lys-144 functions as the Proton acceptor in the catalytic mechanism. NADP(+) is bound at residue Arg-148.

The protein belongs to the NmrA-type oxidoreductase family. Isoflavone reductase subfamily.

It catalyses the reaction (3R)-vestitone + NADP(+) = 2'-hydroxyformononetin + NADPH + 2 H(+). Its pathway is phytoalexin biosynthesis; pterocarpan phytoalexin biosynthesis. Reduces achiral isoflavones to chiral isoflavanones during the biosynthesis of chiral pterocarpan phytoalexins. In Cicer arietinum (Chickpea), this protein is Isoflavone reductase (IFR).